A 298-amino-acid polypeptide reads, in one-letter code: Junctional adhesion molecule B (298 aa).

An N-terminal signal peptide occupies residues 1-28 (MARRSRHRLLLLLLRYLVVALGYHKAYG). Residues 29-238 (FSAPKDQQVV…RMQVDDLNIS (210 aa)) lie on the Extracellular side of the membrane. Residues 32–127 (PKDQQVVTAV…GQNLEEDTVT (96 aa)) form the Ig-like V-type domain. Cystine bridges form between Cys50–Cys109 and Cys155–Cys214. Residues Asn98, Asn187, and Asn236 are each glycosylated (N-linked (GlcNAc...) asparagine). The Ig-like C2-type domain maps to 134–238 (PAVPSCEVPS…RMQVDDLNIS (105 aa)). The helical transmembrane segment at 239–259 (GIIAAVVVVALVISVCGLGVC) threads the bilayer. At 260–298 (YAQRKGYFSKETSFQKSNSSSKATTMSENDFKHTKSFII) the chain is on the cytoplasmic side.

The protein belongs to the immunoglobulin superfamily. As to expression, highly expressed in heart, placenta, lung, foreskin and lymph node. Prominently expressed on high endothelial venules and also present on the endothelia of other vessels (at protein level). Also expressed in the brain in the caudate nuclei.

The protein localises to the cell membrane. It localises to the cell junction. It is found in the tight junction. Its function is as follows. Junctional adhesion protein that mediates heterotypic cell-cell interactions with its cognate receptor JAM3 to regulate different cellular processes. Plays a role in homing and mobilization of hematopoietic stem and progenitor cells within the bone marrow. At the surface of bone marrow stromal cells, it contributes to the retention of the hematopoietic stem and progenitor cells expressing JAM3. Plays a central role in leukocytes extravasation by facilitating not only transmigration but also tethering and rolling of leukocytes along the endothelium. Tethering and rolling of leukocytes are dependent on the binding by JAM2 of the integrin alpha-4/beta-1. Plays a role in spermatogenesis where JAM2 and JAM3, which are respectively expressed by Sertoli and germ cells, mediate an interaction between both cell types and play an essential role in the anchorage of germ cells onto Sertoli cells and the assembly of cell polarity complexes during spermatid differentiation. Also functions as an inhibitory somatodendritic cue that prevents the myelination of non-axonal parts of neurons. During myogenesis, it is involved in myocyte fusion. May also play a role in angiogenesis. The sequence is that of Junctional adhesion molecule B from Homo sapiens (Human).